The primary structure comprises 250 residues: tRNA (guanine-N(1)-)-methyltransferase (250 aa).

S-adenosyl-L-methionine contacts are provided by residues G116 and 136–141 (IGDYVL).

The protein belongs to the RNA methyltransferase TrmD family. In terms of assembly, homodimer.

It is found in the cytoplasm. The catalysed reaction is guanosine(37) in tRNA + S-adenosyl-L-methionine = N(1)-methylguanosine(37) in tRNA + S-adenosyl-L-homocysteine + H(+). Functionally, specifically methylates guanosine-37 in various tRNAs. This chain is tRNA (guanine-N(1)-)-methyltransferase, found in Stutzerimonas stutzeri (strain A1501) (Pseudomonas stutzeri).